The following is a 334-amino-acid chain: Phosphate acyltransferase (334 aa).

Belongs to the PlsX family. As to quaternary structure, homodimer. Probably interacts with PlsY.

The protein localises to the cytoplasm. It catalyses the reaction a fatty acyl-[ACP] + phosphate = an acyl phosphate + holo-[ACP]. It functions in the pathway lipid metabolism; phospholipid metabolism. In terms of biological role, catalyzes the reversible formation of acyl-phosphate (acyl-PO(4)) from acyl-[acyl-carrier-protein] (acyl-ACP). This enzyme utilizes acyl-ACP as fatty acyl donor, but not acyl-CoA. This chain is Phosphate acyltransferase, found in Thermotoga petrophila (strain ATCC BAA-488 / DSM 13995 / JCM 10881 / RKU-1).